The chain runs to 123 residues: Large ribosomal subunit protein bL12 (123 aa).

The protein belongs to the bacterial ribosomal protein bL12 family. As to quaternary structure, homodimer. Part of the ribosomal stalk of the 50S ribosomal subunit. Forms a multimeric L10(L12)X complex, where L10 forms an elongated spine to which 2 to 4 L12 dimers bind in a sequential fashion. Binds GTP-bound translation factors.

Functionally, forms part of the ribosomal stalk which helps the ribosome interact with GTP-bound translation factors. Is thus essential for accurate translation. The polypeptide is Large ribosomal subunit protein bL12 (Cytophaga hutchinsonii (strain ATCC 33406 / DSM 1761 / CIP 103989 / NBRC 15051 / NCIMB 9469 / D465)).